Consider the following 127-residue polypeptide: MASATILARVGDKQALGAHGEELAARFLRDAGMEIVARNWRCRYGELDLIARDAQTTAFVEVKTRRGLGFGTPAEAVTFTKRQRIRRLALLWLAEQDGPWQQIRFDVVSVLMTPGHRPVIDHLKAVF.

This sequence belongs to the UPF0102 family.

The polypeptide is UPF0102 protein NFA_41430 (Nocardia farcinica (strain IFM 10152)).